The primary structure comprises 416 residues: Diaminopimelate decarboxylase (416 aa).

K60 carries the N6-(pyridoxal phosphate)lysine modification. Pyridoxal 5'-phosphate-binding positions include G240 and 274–277 (EPGR). Residues R277, R313, and Y317 each contribute to the substrate site. The active-site Proton donor is the C343. 2 residues coordinate substrate: E344 and Y371. Residue Y371 coordinates pyridoxal 5'-phosphate.

This sequence belongs to the Orn/Lys/Arg decarboxylase class-II family. LysA subfamily. In terms of assembly, homodimer. Pyridoxal 5'-phosphate serves as cofactor.

It carries out the reaction meso-2,6-diaminopimelate + H(+) = L-lysine + CO2. It functions in the pathway amino-acid biosynthesis; L-lysine biosynthesis via DAP pathway; L-lysine from DL-2,6-diaminopimelate: step 1/1. Functionally, specifically catalyzes the decarboxylation of meso-diaminopimelate (meso-DAP) to L-lysine. The sequence is that of Diaminopimelate decarboxylase from Pseudomonas fluorescens.